The primary structure comprises 91 residues: Alpha-defensin-related sequence 10 (91 aa).

An N-terminal signal peptide occupies residues 1–19 (MKKLVLLSAFVLLAFQVQA). Residues 20-65 (DSIQNTDEETKTEEQPGEENQAMSVSFGDPEGSALQDAAVGMARPC) constitute a propeptide that is removed on maturation. The tract at residues 21–52 (SIQNTDEETKTEEQPGEENQAMSVSFGDPEGS) is disordered. 7 repeat units span residues 65–67 (CPP), 68–70 (CPS), 71–73 (CPS), 74–76 (CPW), 77–79 (CPM), 80–82 (CPR), and 83–85 (CPS). The segment at 65–85 (CPPCPSCPSCPWCPMCPRCPS) is 7 X 3 AA tandem repeats of C-P-X.

This sequence belongs to the alpha-defensin family. Paneth cells of the small bowel.

The protein localises to the secreted. Functionally, apparent precursor of a secreted, cationic, proline- and cysteine-rich peptide that contains Cys-Pro-Xaa repeats. Unlike cryptdin, the proposed mature peptide region lacks the structural motif characteristic of defensins. It may have microbicidal activities. This is Alpha-defensin-related sequence 10 (Defa-rs10) from Mus musculus (Mouse).